A 266-amino-acid polypeptide reads, in one-letter code: 2-hydroxyisocaproyl-CoA dehydratase activator (266 aa).

Residues 10 to 14 (STASK) and 102 to 104 (GQD) each bind ATP. C125 contributes to the [4Fe-4S] cluster binding site. D134 is a binding site for ATP. Position 164 (C164) interacts with [4Fe-4S] cluster. Positions 215 and 241 each coordinate ATP.

This sequence belongs to the HadI activator family. In terms of assembly, homodimer. [4Fe-4S] cluster serves as cofactor.

Its function is as follows. Involved in the reductive branch of L-leucine fermentation. Required for the activation of (R)-2-hydroxyisocaproyl-CoA dehydratase. The reduced activator transfers one electron to the dehydratase concomitant with hydrolysis of ATP. This protein is extremely sensitive towards oxygen. The sequence is that of 2-hydroxyisocaproyl-CoA dehydratase activator from Clostridioides difficile (Peptoclostridium difficile).